Reading from the N-terminus, the 804-residue chain is Probable protein phosphatase 2C 18 (804 aa).

A helical membrane pass occupies residues 19–39 (DASGPVLFWCVLIIFAVPDAI). The PPM-type phosphatase domain occupies 129-434 (KYIVSSMQGL…ENTTVILVQF (306 aa)). Positions 165, 166, 384, and 425 each coordinate Mn(2+). Disordered stretches follow at residues 460 to 509 (STSA…GGSA), 564 to 599 (DEVELDPNFRPKPQVRRAHDGPSPTPSEIEADLNAS), 623 to 653 (PLQGHDVSSTSTNPNTATDTGSGSRTGDDDV), and 675 to 804 (VDST…EGSP). Low complexity predominate over residues 468-499 (GSDSDTSATSDEGVDDTATAGTTTTGYEAGSS). Residues 628-637 (DVSSTSTNPN) show a composition bias toward polar residues. The segment covering 638–647 (TATDTGSGSR) has biased composition (low complexity). Positions 713-734 (LVNNDTTVADNNASGVADSTTV) are enriched in polar residues. The segment covering 776-789 (DATATATASASAAV) has biased composition (low complexity). Over residues 790 to 804 (ADDEGTAPDDSEGSP) the composition is skewed to acidic residues.

The protein belongs to the PP2C family. It depends on Mg(2+) as a cofactor. The cofactor is Mn(2+).

It localises to the membrane. It catalyses the reaction O-phospho-L-seryl-[protein] + H2O = L-seryl-[protein] + phosphate. The enzyme catalyses O-phospho-L-threonyl-[protein] + H2O = L-threonyl-[protein] + phosphate. This Oryza sativa subsp. japonica (Rice) protein is Probable protein phosphatase 2C 18.